Reading from the N-terminus, the 216-residue chain is Adenylate kinase (216 aa).

10 to 15 (GAGKGT) is a binding site for ATP. Residues 30 to 59 (STGDILRENVKKGTALGLKAKSYMDKGELV) are NMP. Residues T31, R36, 57-59 (ELV), 85-88 (GFPR), and Q92 contribute to the AMP site. The segment at 126–163 (GRRICRSCGASYHLVFNPPKAKDLCDSCGGELYQRDDD) is LID. Residue R127 coordinates ATP. Positions 130 and 133 each coordinate Zn(2+). 136–137 (SY) contributes to the ATP binding site. Residues C150 and C153 each coordinate Zn(2+). Residues R160 and R171 each coordinate AMP. Position 199 (K199) interacts with ATP.

This sequence belongs to the adenylate kinase family. In terms of assembly, monomer.

The protein resides in the cytoplasm. It catalyses the reaction AMP + ATP = 2 ADP. It participates in purine metabolism; AMP biosynthesis via salvage pathway; AMP from ADP: step 1/1. In terms of biological role, catalyzes the reversible transfer of the terminal phosphate group between ATP and AMP. Plays an important role in cellular energy homeostasis and in adenine nucleotide metabolism. This chain is Adenylate kinase, found in Methanocella arvoryzae (strain DSM 22066 / NBRC 105507 / MRE50).